A 700-amino-acid chain; its full sequence is Neoverrucotoxin subunit beta (700 aa).

One can recognise a B30.2/SPRY domain in the interval 506-700 (HMPGVETIKD…QKVNGQIKLL (195 aa)).

It belongs to the SNTX/VTX toxin family. As to quaternary structure, heterodimer of alpha and beta subunits. In terms of processing, not glycosylated. Four intrachain disulfide linkages are present in the heterodimer. No interchain disulfide bound links the two subunits. Expressed by the venom gland.

The protein localises to the secreted. Functionally, has hemolytic and lethal activities. Its hemolytic activity is inhibited by anionic lipids, especially potently by cardiolipin. The protein is Neoverrucotoxin subunit beta of Synanceia verrucosa (Reef stonefish).